Consider the following 237-residue polypeptide: Ribosomal RNA small subunit methyltransferase G (237 aa).

S-adenosyl-L-methionine-binding positions include Gly78, Phe83, 129–130 (AE), and Arg148. The segment at 218–237 (KKETPNKYPRKAGMPNKRPL) is disordered.

The protein belongs to the methyltransferase superfamily. RNA methyltransferase RsmG family.

It is found in the cytoplasm. Its function is as follows. Specifically methylates the N7 position of a guanine in 16S rRNA. The sequence is that of Ribosomal RNA small subunit methyltransferase G from Streptococcus pneumoniae (strain ATCC BAA-255 / R6).